Here is a 241-residue protein sequence, read N- to C-terminus: Ribosome-inactivating protein luffaculin 1 (241 aa).

4 N-linked (GlcNAc...) asparagine glycosylation sites follow: N28, N33, N77, and N84. E159 is a catalytic residue. The N-linked (GlcNAc...) asparagine glycan is linked to N205.

Belongs to the ribosome-inactivating protein family. Type 1 RIP subfamily.

It catalyses the reaction Endohydrolysis of the N-glycosidic bond at one specific adenosine on the 28S rRNA.. The sequence is that of Ribosome-inactivating protein luffaculin 1 from Luffa acutangula (Ridged gourd).